The sequence spans 488 residues: Glycogen synthase (488 aa).

Lys17 contacts ADP-alpha-D-glucose.

The protein belongs to the glycosyltransferase 1 family. Bacterial/plant glycogen synthase subfamily.

The catalysed reaction is [(1-&gt;4)-alpha-D-glucosyl](n) + ADP-alpha-D-glucose = [(1-&gt;4)-alpha-D-glucosyl](n+1) + ADP + H(+). The protein operates within glycan biosynthesis; glycogen biosynthesis. Its function is as follows. Synthesizes alpha-1,4-glucan chains using ADP-glucose. This Nitratidesulfovibrio vulgaris (strain DSM 19637 / Miyazaki F) (Desulfovibrio vulgaris) protein is Glycogen synthase.